The sequence spans 527 residues: Ankyrin repeat domain-containing protein 42 (527 aa).

The segment at 1-27 (MPGVANPGPSKSRRETADSSSRKKVHF) is disordered. A compositionally biased stretch (basic and acidic residues) spans 12–21 (SRRETADSSS). 10 ANK repeats span residues 25–54 (VHFS…NLNE), 59–88 (HQFT…DATQ), 92–121 (RGWT…NLAT), 125–154 (RGCT…DPSV), 158–187 (REWK…GIED), 191–220 (NGNL…SATQ), 228–257 (NGEN…EGSH), 263–293 (DLAF…NLNE), 297–326 (NGST…ESNI), and 330–360 (AGET…EIDD). The stretch at 395-484 (NARMRAHKKI…ETLQKIQVTS (90 aa)) forms a coiled coil.

The protein is Ankyrin repeat domain-containing protein 42 (Ankrd42) of Mus musculus (Mouse).